A 463-amino-acid chain; its full sequence is Serine/threonine-protein kinase sgk-1 (463 aa).

Residues 135–392 enclose the Protein kinase domain; the sequence is FDYLTTIGKG…FRDIRDHPFF (258 aa). ATP-binding positions include 141–149 and Lys164; that span reads IGKGSFGRV. The active-site Proton acceptor is the Asp259. In terms of domain architecture, AGC-kinase C-terminal spans 393–463; it reads LPVDWDKLLN…TFVDTNRVLV (71 aa).

The protein belongs to the protein kinase superfamily. AGC Ser/Thr protein kinase family. Interacts with pdk-1, akt-1, akt-2 and daf-16. Part of a complex containing sgk-1, akt-1 and akt-2. Interacts with let-92 phosphatase regulatory subunit pptr-1. The cofactor is Mg(2+). Expressed in late embryos just before hatching. At postembryonic stages, expressed in sensory and motor neurons and in the intestine. Highly expressed in the intestine and head and tail neurons.

Its subcellular location is the cytoplasm. It is found in the nucleus. It localises to the apical cell membrane. The enzyme catalyses L-seryl-[protein] + ATP = O-phospho-L-seryl-[protein] + ADP + H(+). It catalyses the reaction L-threonyl-[protein] + ATP = O-phospho-L-threonyl-[protein] + ADP + H(+). With respect to regulation, phosphorylated and activated by pdk-1. In terms of biological role, acts downstream of PI3 kinase age-1 and kinase pdk-1 in the daf-2/insulin receptor-like transduction pathway. Essential role in regulating development, stress response, and longevity. Phosphorylates Forkhead-related daf-16 and the longevity-promoting skn-1 transcription factors, which inhibits their entry into the nucleus and antagonizes their function. Promotes the cytoplasmic localization of the transcription factor pqm-1. Plays a role in the intracellular trafficking of proteins such as mig-14 to the cell membrane, and this may be through positively regulating ceramide synthesis. Acts downstream of rict-1 to regulate fat storage, size, development and vitellogenesis. Downstream of age-1 and together with akt-1/2, promotes cell survival during embryonic development. Plays a role in maintaining the gonadal basement membrane through antagonizing akt-1 activity. Does not appear to play a role in immune function. The chain is Serine/threonine-protein kinase sgk-1 from Caenorhabditis elegans.